Here is a 307-residue protein sequence, read N- to C-terminus: Elongation factor Ts (307 aa).

An involved in Mg(2+) ion dislocation from EF-Tu region spans residues 79–82 (TDFV).

The protein belongs to the EF-Ts family.

Its subcellular location is the cytoplasm. Its function is as follows. Associates with the EF-Tu.GDP complex and induces the exchange of GDP to GTP. It remains bound to the aminoacyl-tRNA.EF-Tu.GTP complex up to the GTP hydrolysis stage on the ribosome. The chain is Elongation factor Ts from Sinorhizobium medicae (strain WSM419) (Ensifer medicae).